A 508-amino-acid chain; its full sequence is Photosystem II CP47 reaction center protein (508 aa).

Helical transmembrane passes span 21 to 36 (AVHIMHTALVSGWAGS), 101 to 115 (IVFSGLCFLAAIWHW), 140 to 156 (GIHLFLAGVACFGFGAF), 203 to 218 (IAAGTLGILAGLFHLS), 237 to 252 (VLSSSIAAVFFAAFVV), and 457 to 472 (TFALLFFFGHIWHGAR).

Belongs to the PsbB/PsbC family. PsbB subfamily. As to quaternary structure, PSII is composed of 1 copy each of membrane proteins PsbA, PsbB, PsbC, PsbD, PsbE, PsbF, PsbH, PsbI, PsbJ, PsbK, PsbL, PsbM, PsbT, PsbX, PsbY, PsbZ, Psb30/Ycf12, at least 3 peripheral proteins of the oxygen-evolving complex and a large number of cofactors. It forms dimeric complexes. Binds multiple chlorophylls. PSII binds additional chlorophylls, carotenoids and specific lipids. is required as a cofactor.

The protein resides in the plastid. The protein localises to the chloroplast thylakoid membrane. One of the components of the core complex of photosystem II (PSII). It binds chlorophyll and helps catalyze the primary light-induced photochemical processes of PSII. PSII is a light-driven water:plastoquinone oxidoreductase, using light energy to abstract electrons from H(2)O, generating O(2) and a proton gradient subsequently used for ATP formation. The chain is Photosystem II CP47 reaction center protein from Secale cereale (Rye).